Consider the following 589-residue polypeptide: Oligo-1,6-glucosidase IMA2 (589 aa).

Asp-215 functions as the Nucleophile in the catalytic mechanism. Glu-277 acts as the Proton donor in catalysis.

This sequence belongs to the glycosyl hydrolase 13 family.

It catalyses the reaction Hydrolysis of (1-&gt;6)-alpha-D-glucosidic linkages in some oligosaccharides produced from starch and glycogen by alpha-amylase, and in isomaltose.. Its function is as follows. Alpha-glucosidase with specificity for isomaltase, methyl-alpha-glucoside, and palatinose. This is Oligo-1,6-glucosidase IMA2 (IMA2) from Saccharomyces cerevisiae (strain ATCC 204508 / S288c) (Baker's yeast).